Consider the following 141-residue polypeptide: Galactose-6-phosphate isomerase subunit LacA 1 (141 aa).

This sequence belongs to the LacAB/RpiB family. As to quaternary structure, heteromultimeric protein consisting of LacA and LacB.

The catalysed reaction is aldehydo-D-galactose 6-phosphate = keto-D-tagatose 6-phosphate. Its pathway is carbohydrate metabolism; D-galactose 6-phosphate degradation; D-tagatose 6-phosphate from D-galactose 6-phosphate: step 1/1. The polypeptide is Galactose-6-phosphate isomerase subunit LacA 1 (Streptococcus pyogenes serotype M6 (strain ATCC BAA-946 / MGAS10394)).